The primary structure comprises 403 residues: Probable tRNA sulfurtransferase (403 aa).

Residues 60–165 (QLAEERLKPI…KEGVFLSCRT (106 aa)) form the THUMP domain. Residues 183-184 (ML), 208-209 (HF), arginine 265, glycine 287, and glutamine 296 each bind ATP.

It belongs to the ThiI family.

Its subcellular location is the cytoplasm. The enzyme catalyses [ThiI sulfur-carrier protein]-S-sulfanyl-L-cysteine + a uridine in tRNA + 2 reduced [2Fe-2S]-[ferredoxin] + ATP + H(+) = [ThiI sulfur-carrier protein]-L-cysteine + a 4-thiouridine in tRNA + 2 oxidized [2Fe-2S]-[ferredoxin] + AMP + diphosphate. It carries out the reaction [ThiS sulfur-carrier protein]-C-terminal Gly-Gly-AMP + S-sulfanyl-L-cysteinyl-[cysteine desulfurase] + AH2 = [ThiS sulfur-carrier protein]-C-terminal-Gly-aminoethanethioate + L-cysteinyl-[cysteine desulfurase] + A + AMP + 2 H(+). It functions in the pathway cofactor biosynthesis; thiamine diphosphate biosynthesis. Functionally, catalyzes the ATP-dependent transfer of a sulfur to tRNA to produce 4-thiouridine in position 8 of tRNAs, which functions as a near-UV photosensor. Also catalyzes the transfer of sulfur to the sulfur carrier protein ThiS, forming ThiS-thiocarboxylate. This is a step in the synthesis of thiazole, in the thiamine biosynthesis pathway. The sulfur is donated as persulfide by IscS. This is Probable tRNA sulfurtransferase from Listeria innocua serovar 6a (strain ATCC BAA-680 / CLIP 11262).